The primary structure comprises 147 residues: Hemoglobin subunit epsilon (147 aa).

Residues 3-147 enclose the Globin domain; the sequence is HFTAEEKAAI…VAIALGHKYH (145 aa). Ser14 and Ser51 each carry phosphoserine. Residues His64 and His93 each coordinate heme b.

Belongs to the globin family. Heterotetramer of two alpha chains and two epsilon chains in early embryonic hemoglobin Gower-2; two zeta chains and two epsilon chains in early embryonic hemoglobin Gower-1. As to expression, red blood cells.

Functionally, the epsilon chain is a beta-type chain of early mammalian embryonic hemoglobin. The sequence is that of Hemoglobin subunit epsilon (HBE1) from Callithrix jacchus (White-tufted-ear marmoset).